The chain runs to 134 residues: Phosphoribosyl-AMP cyclohydrolase (134 aa).

Aspartate 78 serves as a coordination point for Mg(2+). A Zn(2+)-binding site is contributed by cysteine 79. The Mg(2+) site is built by aspartate 80 and aspartate 82. 2 residues coordinate Zn(2+): cysteine 96 and cysteine 103.

Belongs to the PRA-CH family. In terms of assembly, homodimer. Mg(2+) is required as a cofactor. Zn(2+) serves as cofactor.

Its subcellular location is the cytoplasm. It carries out the reaction 1-(5-phospho-beta-D-ribosyl)-5'-AMP + H2O = 1-(5-phospho-beta-D-ribosyl)-5-[(5-phospho-beta-D-ribosylamino)methylideneamino]imidazole-4-carboxamide. It functions in the pathway amino-acid biosynthesis; L-histidine biosynthesis; L-histidine from 5-phospho-alpha-D-ribose 1-diphosphate: step 3/9. Catalyzes the hydrolysis of the adenine ring of phosphoribosyl-AMP. This Cupriavidus necator (strain ATCC 17699 / DSM 428 / KCTC 22496 / NCIMB 10442 / H16 / Stanier 337) (Ralstonia eutropha) protein is Phosphoribosyl-AMP cyclohydrolase.